Consider the following 138-residue polypeptide: 1,4-dihydroxy-2-naphthoyl-CoA hydrolase (138 aa).

The active site involves D16.

The protein belongs to the 4-hydroxybenzoyl-CoA thioesterase family. DHNA-CoA hydrolase subfamily.

It catalyses the reaction 1,4-dihydroxy-2-naphthoyl-CoA + H2O = 1,4-dihydroxy-2-naphthoate + CoA + H(+). It participates in cofactor biosynthesis; phylloquinone biosynthesis. It functions in the pathway quinol/quinone metabolism; 1,4-dihydroxy-2-naphthoate biosynthesis; 1,4-dihydroxy-2-naphthoate from chorismate: step 7/7. In terms of biological role, catalyzes the specific hydrolysis of 1,4-dihydroxy-2-naphthoyl-CoA (DHNA-CoA) to 1,4-dihydroxy-2-naphthoate (DHNA), a reaction involved in phylloquinone (vitamin K1) biosynthesis. Is not active on benzoyl-CoA, phenylacetyl-CoA and aliphatic acyl-CoA thioesters. The polypeptide is 1,4-dihydroxy-2-naphthoyl-CoA hydrolase (Synechocystis sp. (strain ATCC 27184 / PCC 6803 / Kazusa)).